Reading from the N-terminus, the 645-residue chain is 1-phosphatidylinositol 4,5-bisphosphate phosphodiesterase zeta-1 (645 aa).

An EF-hand domain is found at 42 to 77; sequence CHFAHVKRIFKENDRHNQGRITTEDFRTIYRCIVHR. In terms of domain architecture, PI-PLC X-box spans 162-306; the sequence is QDMNKPLNDY…LKFKILVKNK (145 aa). Active-site residues include H177 and H222. Positions 385–501 constitute a PI-PLC Y-box domain; sequence LSDLVIYTKA…GYVLKPDFLR (117 aa). The 125-residue stretch at 501-625 folds into the C2 domain; that stretch reads RDTTLGFNPN…KGYRRVPLFS (125 aa).

Interacts via its C2 domain with PtdIns(3)P and, to a lesser extent, PtdIns(5)P in vitro. Requires Ca(2+) as cofactor.

It is found in the nucleus. It localises to the cytoplasm. The protein localises to the perinuclear region. The catalysed reaction is a 1,2-diacyl-sn-glycero-3-phospho-(1D-myo-inositol-4,5-bisphosphate) + H2O = 1D-myo-inositol 1,4,5-trisphosphate + a 1,2-diacyl-sn-glycerol + H(+). Functionally, the production of the second messenger molecules diacylglycerol (DAG) and inositol 1,4,5-trisphosphate (IP3) is mediated by activated phosphatidylinositol-specific phospholipase C enzymes. In vitro, hydrolyzes PtdIns(4,5)P2 in a Ca(2+)-dependent manner. Triggers intracellular Ca(2+) oscillations in oocytes solely during M phase and is involved in inducing oocyte activation and initiating embryonic development up to the blastocyst stage. Is therefore a strong candidate for the egg-activating soluble sperm factor that is transferred from the sperm into the egg cytoplasm following gamete membrane fusion. May exert an inhibitory effect on phospholipase-C-coupled processes that depend on calcium ions and protein kinase C, including CFTR trafficking and function. The polypeptide is 1-phosphatidylinositol 4,5-bisphosphate phosphodiesterase zeta-1 (Rattus norvegicus (Rat)).